The primary structure comprises 365 residues: MNLAAMDPQTYDTQLEHKRIKLEQAFAQFETPSVEVFASEPANYRMRAEFRMWHDGDDLYYYMFDKVLNEKVRCDQYLPASVLINQMMSALIAELKPNPSLRHKLFQVDFLSTLSGEILVSLLYHRQLDDQWRADATALKAKLSSQFNVNIIGRARKQKIDLDKDFVVESLQVNDKTFLYKQIENSFTQPNAKVSVKMLEWAIDATQNSQGDLLELYCGNGNFSIALAQNFNRVLATELAKPSVDAAQYNIEVNGIENLQIIRMSAEDFSDAMAKKRSFRRLEGIDLDSYVCNTIFVDPPRAGIDPDTLALVQGYERILYISCNPETLKDNLQQLNETHKVTRFALFDQFPYTDHMETGVLLERR.

Q189, Y217, N222, E238, and D298 together coordinate S-adenosyl-L-methionine. The Nucleophile role is filled by C323. The Proton acceptor role is filled by E357.

This sequence belongs to the class I-like SAM-binding methyltransferase superfamily. RNA M5U methyltransferase family. TrmA subfamily.

It catalyses the reaction uridine(54) in tRNA + S-adenosyl-L-methionine = 5-methyluridine(54) in tRNA + S-adenosyl-L-homocysteine + H(+). It carries out the reaction uridine(341) in tmRNA + S-adenosyl-L-methionine = 5-methyluridine(341) in tmRNA + S-adenosyl-L-homocysteine + H(+). Functionally, dual-specificity methyltransferase that catalyzes the formation of 5-methyluridine at position 54 (m5U54) in all tRNAs, and that of position 341 (m5U341) in tmRNA (transfer-mRNA). This is tRNA/tmRNA (uracil-C(5))-methyltransferase from Shewanella baltica (strain OS155 / ATCC BAA-1091).